The chain runs to 92 residues: Large ribosomal subunit protein eL43 (92 aa).

Zn(2+) is bound by residues Cys-39, Cys-42, Cys-57, and Cys-60. The C4-type zinc-finger motif lies at Cys-39 to Cys-60.

It belongs to the eukaryotic ribosomal protein eL43 family. In terms of assembly, component of the large ribosomal subunit.

It is found in the cytoplasm. Functionally, component of the large ribosomal subunit. The ribosome is a large ribonucleoprotein complex responsible for the synthesis of proteins in the cell. This Ictalurus punctatus (Channel catfish) protein is Large ribosomal subunit protein eL43 (rpl37a).